A 399-amino-acid chain; its full sequence is MAEGIDRKMDDRMEFTTSADVTVAPTFQDMHLKENLLRGIYAYGYESPSAVQSRAIVQICKGRDTIAQAQSGTGKTATFSISMLQVIDTAVRETQALVLSPTRELATQIQSVVMALGDYMNVQCHACIGGTNVGEDIRKLDYGQHIVSGTPGRVADMIRRRNLRTRHIKMLVLDEADELLNRGFREQIYDVYRYLPPATQVVVVSATLPYDVLDMTTKFMTDPVRILVKRDELTLEGLKQYFIAVEKEDWKFDTLCDLYDTLTITQAVIFCNTRRKVDWLTDKMREANFTVSSMHGEMPQKERDSIMQDFRQGNSRVLISTDVWARGIDVQQVSLVINYDLPVNRENYIHRIGRSGRFGRKGVAINFVTSEDVRILRDIELYYSTQIDEMPMNVADLLT.

A Q motif motif is present at residues 25-53 (PTFQDMHLKENLLRGIYAYGYESPSAVQS). In terms of domain architecture, Helicase ATP-binding spans 56–226 (IVQICKGRDT…TKFMTDPVRI (171 aa)). 69–76 (AQSGTGKT) provides a ligand contact to ATP. Positions 174–177 (DEAD) match the DEAD box motif. One can recognise a Helicase C-terminal domain in the interval 237–398 (GLKQYFIAVE…EMPMNVADLL (162 aa)).

This sequence belongs to the DEAD box helicase family. DDX48/FAL1 subfamily.

The protein localises to the nucleus. It is found in the nucleolus. It catalyses the reaction ATP + H2O = ADP + phosphate + H(+). Functionally, ATP-dependent RNA helicase involved in 40S ribosomal subunit biogenesis. Required for the processing and cleavage of 35S pre-rRNA at sites A0, A1, and A2, leading to mature 18S rRNA. The polypeptide is ATP-dependent RNA helicase fal1 (fal1) (Botryotinia fuckeliana (strain B05.10) (Noble rot fungus)).